We begin with the raw amino-acid sequence, 761 residues long: Signal transducer and transcription activator (761 aa).

An SH2 domain is found at 594 to 658 (WKAGCIMGFI…APWTARDFQV (65 aa)). Y711 carries the post-translational modification Phosphotyrosine; by JAK.

The protein belongs to the transcription factor STAT family. As to quaternary structure, forms a homodimer or a heterodimer with a related family member. Post-translationally, tyrosine phosphorylated by hopscotch. Phosphorylation is required for DNA-binding activity and dimerization.

It localises to the cytoplasm. The protein localises to the nucleus. Its function is as follows. Might play a role in signal transduction and activation of transcription. Plays an important role in the segmental pattern formation in the early embryo by activating specific stripes of pair rule gene expression in early development as part of the Janus kinase-STAT pathway. Might play a role in male germline stem cell maintenance. This chain is Signal transducer and transcription activator (Stat92E), found in Drosophila melanogaster (Fruit fly).